Here is a 275-residue protein sequence, read N- to C-terminus: Intercellular adhesion molecule 2 (275 aa).

The N-terminal stretch at 1–24 is a signal peptide; that stretch reads MSSFSYRTLTVALFALICCPGSDE. The Extracellular segment spans residues 25–223; that stretch reads KVFEVHVRPK…EIYEPVSDSQ (199 aa). One can recognise an Ig-like C2-type 1 domain in the interval 41-98; sequence KGSLKVNCSTTCNQPEVGGLETSLDKILLDEQAQWKHYLVSNISHDTVLQCHFTCSGK. 6 N-linked (GlcNAc...) asparagine glycosylation sites follow: N47, N82, N105, N153, N176, and N187. 2 cysteine pairs are disulfide-bonded: C48–C91 and C52–C95. The Ig-like C2-type 2 domain maps to 127–197; sequence GKSFTIECRV…FSCLAVLDLM (71 aa). C134 and C190 form a disulfide bridge. The chain crosses the membrane as a helical span at residues 224 to 248; that stretch reads MVIIVTVVSVLLSLFVTSVLLCFIF. The Cytoplasmic portion of the chain corresponds to 249-275; that stretch reads GQHLRQQRMGTYGVRAAWRRLPQAFRP. The required for interaction with EZR, MSN and RDX and co-localization to microvilli stretch occupies residues 251–275; sequence HLRQQRMGTYGVRAAWRRLPQAFRP.

This sequence belongs to the immunoglobulin superfamily. ICAM family. Interacts with RDX, EZR and MSN.

It is found in the membrane. It localises to the cell projection. The protein localises to the microvillus. ICAM proteins are ligands for the leukocyte adhesion protein LFA-1 (integrin alpha-L/beta-2). ICAM2 may play a role in lymphocyte recirculation by blocking LFA-1-dependent cell adhesion. It mediates adhesive interactions important for antigen-specific immune response, NK-cell mediated clearance, lymphocyte recirculation, and other cellular interactions important for immune response and surveillance. The protein is Intercellular adhesion molecule 2 (ICAM2) of Pan troglodytes (Chimpanzee).